Here is a 425-residue protein sequence, read N- to C-terminus: 5'-deoxyadenosine deaminase (425 aa).

Residues His-62 and His-64 each coordinate Zn(2+). 2 residues coordinate substrate: Glu-91 and His-183. His-210 is a binding site for Zn(2+). Residues Glu-213 and Asp-298 each coordinate substrate. Residue Asp-298 participates in Zn(2+) binding.

The protein belongs to the metallo-dependent hydrolases superfamily. MTA/SAH deaminase family. Homotetramer. The cofactor is Zn(2+).

It catalyses the reaction 5'-deoxyadenosine + H2O + H(+) = 5'-deoxyinosine + NH4(+). The catalysed reaction is S-adenosyl-L-homocysteine + H2O + H(+) = S-inosyl-L-homocysteine + NH4(+). The enzyme catalyses S-methyl-5'-thioadenosine + H2O + H(+) = S-methyl-5'-thioinosine + NH4(+). It carries out the reaction adenosine + H2O + H(+) = inosine + NH4(+). It functions in the pathway amino-acid biosynthesis; S-adenosyl-L-methionine biosynthesis. In terms of biological role, catalyzes the deamination of three SAM-derived enzymatic products, namely 5'-deoxyadenosine, S-adenosyl-L-homocysteine, and 5'-methylthioadenosine, to produce the inosine analogs. Can also deaminate adenosine. The preferred substrate for this enzyme is 5'-deoxyadenosine, but all these substrates are efficiently deaminated. Likely functions in a S-adenosyl-L-methionine (SAM) recycling pathway from S-adenosyl-L-homocysteine (SAH) produced from SAM-dependent methylation reactions. May also be involved in the recycling of 5'-deoxyadenosine, whereupon the 5'-deoxyribose moiety of 5'-deoxyinosine is further metabolized to deoxyhexoses used for the biosynthesis of aromatic amino acids in methanogens. The polypeptide is 5'-deoxyadenosine deaminase (Methanosphaera stadtmanae (strain ATCC 43021 / DSM 3091 / JCM 11832 / MCB-3)).